A 110-amino-acid polypeptide reads, in one-letter code: UPF0060 membrane protein Pfl01_4105 (110 aa).

Helical transmembrane passes span 5–25 (LWFF…WMWL), 28–48 (GKSA…ALLL), 59–79 (AYAA…AVVE), and 84–104 (LGSD…ILFG).

It belongs to the UPF0060 family.

The protein localises to the cell inner membrane. This is UPF0060 membrane protein Pfl01_4105 from Pseudomonas fluorescens (strain Pf0-1).